The chain runs to 811 residues: Phenylalanine--tRNA ligase beta subunit (811 aa).

The tRNA-binding domain occupies 39 to 151; it reads RTWAAGVVVG…AGLQAGQPVG (113 aa). Positions 409 to 495 constitute a B5 domain; the sequence is EPEHSITLRL…RLYGYDNFGE (87 aa). 4 residues coordinate Mg(2+): Asp473, Asp479, Glu482, and Glu483. The 94-residue stretch at 717 to 810 folds into the FDX-ACB domain; it reads SSFPASDRDL…LVERFRVTLR (94 aa).

Belongs to the phenylalanyl-tRNA synthetase beta subunit family. Type 1 subfamily. In terms of assembly, tetramer of two alpha and two beta subunits. Mg(2+) serves as cofactor.

Its subcellular location is the cytoplasm. The enzyme catalyses tRNA(Phe) + L-phenylalanine + ATP = L-phenylalanyl-tRNA(Phe) + AMP + diphosphate + H(+). The sequence is that of Phenylalanine--tRNA ligase beta subunit from Synechococcus sp. (strain ATCC 27144 / PCC 6301 / SAUG 1402/1) (Anacystis nidulans).